A 316-amino-acid polypeptide reads, in one-letter code: tRNA dimethylallyltransferase (316 aa).

17-24 (GPTASGKT) serves as a coordination point for ATP. Position 19–24 (19–24 (TASGKT)) interacts with substrate. Interaction with substrate tRNA regions lie at residues 42–45 (DSAL), 166–170 (QRLSR), 247–252 (RCVGYR), and 280–287 (KRQITWLR).

This sequence belongs to the IPP transferase family. As to quaternary structure, monomer. Mg(2+) serves as cofactor.

The catalysed reaction is adenosine(37) in tRNA + dimethylallyl diphosphate = N(6)-dimethylallyladenosine(37) in tRNA + diphosphate. Its function is as follows. Catalyzes the transfer of a dimethylallyl group onto the adenine at position 37 in tRNAs that read codons beginning with uridine, leading to the formation of N6-(dimethylallyl)adenosine (i(6)A). This Escherichia coli O81 (strain ED1a) protein is tRNA dimethylallyltransferase.